We begin with the raw amino-acid sequence, 510 residues long: NAD(P)H-quinone oxidoreductase subunit 2 B, chloroplastic (510 aa).

13 consecutive transmembrane segments (helical) span residues Leu-24–Leu-44, Trp-59–Trp-79, Ile-99–Ile-119, Met-124–Cys-144, Leu-149–Tyr-169, Leu-184–Leu-204, Ile-229–Phe-249, Thr-262–Phe-284, Trp-295–Ile-315, Met-323–Asp-343, Tyr-354–Leu-374, Ala-395–Phe-415, and Leu-418–Leu-438.

This sequence belongs to the complex I subunit 2 family. As to quaternary structure, NDH is composed of at least 16 different subunits, 5 of which are encoded in the nucleus.

The protein resides in the plastid. It is found in the chloroplast thylakoid membrane. It carries out the reaction a plastoquinone + NADH + (n+1) H(+)(in) = a plastoquinol + NAD(+) + n H(+)(out). The enzyme catalyses a plastoquinone + NADPH + (n+1) H(+)(in) = a plastoquinol + NADP(+) + n H(+)(out). Functionally, NDH shuttles electrons from NAD(P)H:plastoquinone, via FMN and iron-sulfur (Fe-S) centers, to quinones in the photosynthetic chain and possibly in a chloroplast respiratory chain. The immediate electron acceptor for the enzyme in this species is believed to be plastoquinone. Couples the redox reaction to proton translocation, and thus conserves the redox energy in a proton gradient. The protein is NAD(P)H-quinone oxidoreductase subunit 2 B, chloroplastic of Lemna minor (Common duckweed).